A 715-amino-acid chain; its full sequence is Protein psiH (715 aa).

An N-terminal signal peptide occupies residues 1-20 (MNYLKPTIFLILCLVTFVYS). Topologically, residues 21–651 (QPSTLTIQGT…ICKTGAVVST (631 aa)) are extracellular. The PA14 domain occupies 115 to 256 (NYDSKKQVYV…YDYCGVCSGD (142 aa)). N-linked (GlcNAc...) asparagine glycosylation is found at Asn-149, Asn-377, Asn-528, and Asn-622. The helical transmembrane segment at 652-672 (AVIAGVTVAGAVALGVFIYGG) threads the bilayer. Over 673 to 715 (KRGYDYWKESRNVQFSGSNSNPLYEQNPNGSGVNPLYNDNSAL) the chain is Cytoplasmic. Residues 690–715 (SNSNPLYEQNPNGSGVNPLYNDNSAL) form a disordered region.

Belongs to the prespore-cell-inducing factor family.

Its subcellular location is the membrane. The chain is Protein psiH (psiH) from Dictyostelium discoideum (Social amoeba).